Consider the following 614-residue polypeptide: Beta-glucosidase 33 (614 aa).

The signal sequence occupies residues 1–26 (MATATLTLFLGLLALTSTILSFNADA). A beta-D-glucoside contacts are provided by residues Gln113, His217, and 262-263 (NE). Glu263 (proton donor) is an active-site residue. Cys282 and Cys290 form a disulfide bridge. A glycan (N-linked (GlcNAc...) asparagine) is linked at Asn344. Tyr407 contacts a beta-D-glucoside. 3 N-linked (GlcNAc...) asparagine glycosylation sites follow: Asn419, Asn432, and Asn439. Glu479 contacts a beta-D-glucoside. Glu479 functions as the Nucleophile in the catalytic mechanism. N-linked (GlcNAc...) asparagine glycosylation occurs at Asn491. A beta-D-glucoside is bound by residues Trp529, 536-537 (EW), and Phe545.

This sequence belongs to the glycosyl hydrolase 1 family.

It carries out the reaction Hydrolysis of terminal, non-reducing beta-D-glucosyl residues with release of beta-D-glucose.. The chain is Beta-glucosidase 33 from Arabidopsis thaliana (Mouse-ear cress).